Reading from the N-terminus, the 514-residue chain is 2,3-bisphosphoglycerate-independent phosphoglycerate mutase (514 aa).

2 residues coordinate Mn(2+): Asp14 and Ser64. The active-site Phosphoserine intermediate is the Ser64. Substrate is bound by residues His125, 155–156, Arg187, Arg193, 263–266, and Lys336; these read RD and RADR. Mn(2+)-binding residues include Asp403, His407, Asp444, His445, and His463.

Belongs to the BPG-independent phosphoglycerate mutase family. Monomer. The cofactor is Mn(2+).

The catalysed reaction is (2R)-2-phosphoglycerate = (2R)-3-phosphoglycerate. It participates in carbohydrate degradation; glycolysis; pyruvate from D-glyceraldehyde 3-phosphate: step 3/5. Its function is as follows. Catalyzes the interconversion of 2-phosphoglycerate and 3-phosphoglycerate. This is 2,3-bisphosphoglycerate-independent phosphoglycerate mutase from Escherichia coli O1:K1 / APEC.